The chain runs to 195 residues: L-rhamnose-binding lectin CSL2 (195 aa).

SUEL-type lectin domains follow at residues 1-97 (TRVV…YTCL) and 104-195 (TCEG…YTCG).

Its function is as follows. L-rhamnose binding lectin. Has hemagglutinating activity towards rabbit erythrocytes and human type B erythrocytes. Hemagglutinating activity is inhibited by smooth-type lipopolysaccharide (LPS) from S.flexneri 1A and E.coli K12, but not by rough-type LPS from S.flexneri, E.coli K12 and E.coli EH100. Agglutinates E.coli K12 and B.subtilis. The polypeptide is L-rhamnose-binding lectin CSL2 (Oncorhynchus keta (Chum salmon)).